A 710-amino-acid polypeptide reads, in one-letter code: Elongation factor G (710 aa).

The region spanning 8 to 297 (ERVRNIGIAA…AVVDYLPSPI (290 aa)) is the tr-type G domain. GTP is bound by residues 17-24 (AHIDAGKT), 96-100 (DTPGH), and 150-153 (NKMD).

This sequence belongs to the TRAFAC class translation factor GTPase superfamily. Classic translation factor GTPase family. EF-G/EF-2 subfamily.

It localises to the cytoplasm. In terms of biological role, catalyzes the GTP-dependent ribosomal translocation step during translation elongation. During this step, the ribosome changes from the pre-translocational (PRE) to the post-translocational (POST) state as the newly formed A-site-bound peptidyl-tRNA and P-site-bound deacylated tRNA move to the P and E sites, respectively. Catalyzes the coordinated movement of the two tRNA molecules, the mRNA and conformational changes in the ribosome. The chain is Elongation factor G from Synechococcus sp. (strain JA-3-3Ab) (Cyanobacteria bacterium Yellowstone A-Prime).